The following is a 288-amino-acid chain: Polyprenyl transferase eriF (288 aa).

6 consecutive transmembrane segments (helical) span residues 24–44 (ASII…TLPL), 51–71 (YIFL…LNQV), 101–121 (IAAF…LPET), 145–165 (CIAM…AISP), 215–235 (FIIT…GGIF), and 268–288 (FYTY…HGLI).

This sequence belongs to the UbiA prenyltransferase family. Mg(2+) serves as cofactor.

It is found in the membrane. Its function is as follows. Polyprenyl transferase; part of the gene cluster that mediates the biosynthesis of erinacines, cyathane-xylosides that show unique biological activities, including leishmanicidal activity, stimulating activity for nerve growth-factor synthesis, and agonistic activity toward the kappa opioid receptor. The role of eriF within the pathway has still to be determined. The first step of the erinacines biosynthesis pathway is catalyzed by the geranylgeranyl diphosphate (GGPP) synthase eriE via conversion of farnesyl pyrophosphate and isopentyl pyrophosphate into geranylgeranyl pyrophosphate (GGPP). GGPP is then substrate of the diterpene cyclase eriG for the production of cyatha-3,12-diene. The cytochrome P450 monooxygenase eriI then hydroxylates cyatha-3,12-diene at C-14 of the seven-membered ring to produce erinacol, which is further hydroxylated at C-15 by the cytochrome P450 monooxygenase eriC to yield cyathadiol. The cytochrome P450 monooxygenase eriA then catalyzes C-11 hydroxylation in the presence of the short chain dehydrogenase/reductase (SDR) eriH, which leads to the production of cyathatriol. The acetyltransferase eriL converts cyathatriol into 11-O-acetyl-cyathatriol. The SDR eriH catalyzes further oxidation of 11-O-acetyl-cyathatriol into 1-O-acetylcyathin A3. Finally, the glycosyl transferase eriJ tranfers xylose from UDP-xylose onto C-14 of 11-O-acetyl-cyathatriol to form eracine Q. EriJ is also able to convert 11-O-acetyl-cyathatriol to eracine Q2 by using UDP-D-glucose as cosubstrate, but at a lower rate. The chain is Polyprenyl transferase eriF from Hericium erinaceus (Lion's mane mushroom).